The primary structure comprises 36 residues: MKPRLCFNFRRRSISPCYISISYLLVAKLFKLFKIH.

This sequence belongs to the POLARIS peptide family. In terms of tissue distribution, mostly expressed in the embryonic root from the heart stage and in the seedling primary and lateral root tips, especially in the columella initials and lateral root cap. Also detectable in aerial parts of the seedling, sepals and leaves, principally in vascular tissues of the lamina and petiole.

Required for correct root growth and vascular development, probably by modulating both cell division rate in meristems and cell elongation in roots. Negative regulator of the ethylene signaling pathway that modulates microtubule cytoskeleton dynamics and auxin transport and homeostasis, and possibly cytokinin signaling, thus influencing root growth and lateral root development. This is Peptide POLARIS (PLS) from Arabidopsis thaliana (Mouse-ear cress).